The following is a 93-amino-acid chain: Small ribosomal subunit protein uS19 (93 aa).

The protein belongs to the universal ribosomal protein uS19 family.

Protein S19 forms a complex with S13 that binds strongly to the 16S ribosomal RNA. The polypeptide is Small ribosomal subunit protein uS19 (Oleidesulfovibrio alaskensis (strain ATCC BAA-1058 / DSM 17464 / G20) (Desulfovibrio alaskensis)).